We begin with the raw amino-acid sequence, 568 residues long: Probable WRKY transcription factor 34 (568 aa).

The segment at residues 172–236 (ACCAPADDGY…YTGDHIHSKP (65 aa)) is a DNA-binding region (WRKY 1). Zn(2+) contacts are provided by cysteine 203, cysteine 208, histidine 231, and histidine 233. Disordered regions lie at residues 230 to 252 (DHIHSKPPPNRRSGIGSSGTGQD) and 337 to 360 (KRRKLEAYATETSGSTRASREPRV). Residues 366-431 (SDIDILDDGY…YIGKHTHVVP (66 aa)) constitute a DNA-binding region (WRKY 2). 4 residues coordinate Zn(2+): cysteine 397, cysteine 402, histidine 426, and histidine 428.

The protein belongs to the WRKY group I family.

Its subcellular location is the nucleus. In terms of biological role, transcription factor. Interacts specifically with the W box (5'-(T)TGAC[CT]-3'), a frequently occurring elicitor-responsive cis-acting element. This Arabidopsis thaliana (Mouse-ear cress) protein is Probable WRKY transcription factor 34 (WRKY34).